A 164-amino-acid polypeptide reads, in one-letter code: Small ribosomal subunit protein uS5 (164 aa).

The 64-residue stretch at 10–73 (LEERVVAINR…EAAKKNLIEV (64 aa)) folds into the S5 DRBM domain.

The protein belongs to the universal ribosomal protein uS5 family. As to quaternary structure, part of the 30S ribosomal subunit. Contacts proteins S4 and S8.

With S4 and S12 plays an important role in translational accuracy. Its function is as follows. Located at the back of the 30S subunit body where it stabilizes the conformation of the head with respect to the body. The chain is Small ribosomal subunit protein uS5 from Streptococcus thermophilus (strain CNRZ 1066).